The following is a 435-amino-acid chain: Astacin-like metalloendopeptidase (435 aa).

An N-terminal signal peptide occupies residues 1-23; that stretch reads MGIMGSLWPWILTMLSLLGLSMG. One can recognise a Peptidase M12A domain in the interval 85–282; the sequence is RLLSVTNNKW…TRVCRLYNCS (198 aa). 2 cysteine pairs are disulfide-bonded: Cys132–Cys281 and Cys153–Cys172. His182 is a Zn(2+) binding site. Residue Glu183 is part of the active site. Positions 186 and 192 each coordinate Zn(2+). The span at 318 to 329 shows a compositional bias: low complexity; that stretch reads SEESGSSAPSGS. The segment at 318–356 is disordered; that stretch reads SEESGSSAPSGSRTGGQSIAGLGNSQQGWEHPPQSTFSV. Polar residues predominate over residues 340-355; sequence GNSQQGWEHPPQSTFS.

In terms of assembly, interacts (via N-terminal domain) with SPACA3; the interaction occurs during fertilization. Zn(2+) is required as a cofactor. In terms of tissue distribution, ovary-specific. Expressed in secondary, antral and Graafian follicle oocytes. Expressed in the egg cells. Not detected in two-cell embryos. Not detected in naked oocytes, oocytes in primordial or unilaminar primary follicles, or in any other ovarian cells at pre-pubertal, pubertal or adult stages (at protein level). Ovary-specific.

It is found in the cytoplasm. It localises to the cell membrane. Its subcellular location is the cytoplasmic vesicle. The protein resides in the secretory vesicle. The protein localises to the cortical granule. Inhibited by wide spectrum metalloproteinase inhibitor batimastat (BB-94). Also inhibited by EDTA. Its function is as follows. Oocyte-specific oolemmal receptor involved in sperm and egg adhesion and fertilization. Plays a role in the polyspermy inhibition. Probably acts as a protease for the post-fertilization cleavage of ZP2. Cleaves the sperm-binding ZP2 at the surface of the zona pellucida after fertilization and cortical granule exocytosis, rendering the zona pellucida unable to support further sperm binding. This Mus musculus (Mouse) protein is Astacin-like metalloendopeptidase.